We begin with the raw amino-acid sequence, 372 residues long: Alpha-parvin (372 aa).

The segment at 1-31 (MATSPQKSPLVPKSPTPKSPPSRKKDDSFLG) is disordered. A2 carries the post-translational modification N-acetylalanine. A phosphoserine mark is found at S8, S14, and S19. Residues 21–25 (PSRKK) are interaction with ARHGAP31. Phosphoserine is present on residues S28 and S62. 2 consecutive Calponin-homology (CH) domains span residues 95–202 (QELM…QYFR) and 262–369 (NVVK…TKYR). The interval 223–372 (GILQSRQIQE…NLFTKYRNVE (150 aa)) is required for interaction with TESK1 and ILK.

It belongs to the parvin family. Component of the heterotrimeric IPP (ILK-PINCH-PARVIN) complex composed of ILK, LIMS1/PINCH and PARVA; the complex binds to F-actin via the C-terminal tail of LIMS1 and the N-terminal region of PARVA, promoting F-actin filament bundling. Interacts with TGFB1I1. Interacts with ARHGAP31. Interacts with the actin cytoskeleton. Interacts (via C-terminus) with TESK1 (via C-terminus); the interaction inhibits TESK1 kinase activity. Interacts with PXN/PAXILLIN (via LD motif 4).

The protein localises to the cell junction. It localises to the focal adhesion. The protein resides in the cell membrane. It is found in the cytoplasm. Its subcellular location is the cytoskeleton. The protein localises to the myofibril. It localises to the sarcomere. The protein resides in the z line. In terms of biological role, plays a role in sarcomere organization and in smooth muscle cell contraction. Required for normal development of the embryonic cardiovascular system, and for normal septation of the heart outflow tract. Plays a role in sprouting angiogenesis and is required for normal adhesion of vascular smooth muscle cells to endothelial cells during blood vessel development. Plays a role in the reorganization of the actin cytoskeleton, formation of lamellipodia and ciliogenesis. Plays a role in the establishment of cell polarity, cell adhesion, cell spreading, and directed cell migration. Within the IPP (ILK-PINCH-PARVIN) complex, binds to F-actin, promoting F-actin bundling, a process required to generate force for actin cytoskeleton reorganization and subsequent dynamic cell adhesion events such as cell spreading and migration. This is Alpha-parvin (Parva) from Mus musculus (Mouse).